Consider the following 57-residue polypeptide: Protein translocase subunit SecE (57 aa).

The chain crosses the membrane as a helical span at residues 30-50 (LIAGAGIVFVGFLGFLIFAIM).

Belongs to the SecE/SEC61-gamma family. As to quaternary structure, component of the Sec protein translocase complex. Heterotrimer consisting of SecY (alpha), SecG (beta) and SecE (gamma) subunits. The heterotrimers can form oligomers, although 1 heterotrimer is thought to be able to translocate proteins. Interacts with the ribosome. May interact with SecDF, and other proteins may be involved.

Its subcellular location is the cell membrane. Functionally, essential subunit of the Sec protein translocation channel SecYEG. Clamps together the 2 halves of SecY. May contact the channel plug during translocation. The sequence is that of Protein translocase subunit SecE from Haloquadratum walsbyi (strain DSM 16790 / HBSQ001).